The sequence spans 314 residues: N-alpha-acetyltransferase 80 (314 aa).

The region spanning 90 to 243 (LEPVHCRPEL…TTVLRAFSKP (154 aa)) is the N-acetyltransferase domain. Substrate contacts are provided by residues Arg113 and 118–121 (RLHS). Acetyl-CoA-binding positions include 169–171 (VVV), 177–182 (GRGFGR), and Gln207. Residues 260–295 (VPRSSKGPPLPPPPPLPQSLTASPPPSPEPLPQSPL) are disordered. The segment covering 267–292 (PPLPPPPPLPQSLTASPPPSPEPLPQ) has biased composition (pro residues).

The protein belongs to the acetyltransferase family.

Its subcellular location is the cytoplasm. It localises to the cytosol. The enzyme catalyses N-terminal L-aspartyl-L-aspartyl-L-aspartyl-[protein] + acetyl-CoA = N-terminal N-acetyl-L-aspartyl-L-aspartyl-L-aspartyl-[protein] + CoA + H(+). It catalyses the reaction N-terminal L-glutamyl-L-glutamyl-L-glutamyl-[protein] + acetyl-CoA = N-terminal N-acetyl-L-glutamyl-L-glutamyl-L-glutamyl-[protein] + CoA + H(+). In terms of biological role, N-alpha-acetyltransferase that specifically mediates the acetylation of the acidic amino terminus of processed forms of beta- and gamma-actin (ACTB and ACTG, respectively). N-terminal acetylation of processed beta- and gamma-actin regulates actin filament depolymerization and elongation. In vivo, preferentially displays N-terminal acetyltransferase activity towards acid N-terminal sequences starting with Asp-Asp-Asp and Glu-Glu-Glu. In vitro, shows high activity towards Met-Asp-Glu-Leu and Met-Asp-Asp-Asp. May act as a tumor suppressor. This Mus musculus (Mouse) protein is N-alpha-acetyltransferase 80.